The sequence spans 331 residues: Laforin (331 aa).

Residues 1–124 (MRFRFGVVVP…NNLVDGVYCL (124 aa)) form the CBM20 domain. Residue S25 is modified to Phosphoserine; by AMPK. Residues W32, K87, 103 to 107 (GPHHD), D197, D235, and R241 contribute to the substrate site. The Tyrosine-protein phosphatase domain occupies 156–323 (HYSRILPNIW…QEDFFQKFGK (168 aa)). C266 acts as the Phosphocysteine intermediate in catalysis. The Glucan phosphatase signature motif CXAGXGR signature appears at 266–272 (CNAGVGR). Substrate-binding positions include 267-272 (NAGVGR) and Y304.

This sequence belongs to the protein-tyrosine phosphatase family. Homodimer. Interacts with itself. Interacts with PPP1R3B, PPP1R3C, PPP1R3D, HIRIP5, and EPM2AIP1. Binds glycogen and Lafora bodies. Interacts with NHLRC1/malin (via the NHL repeats). Forms a complex with NHLRC1/malin and HSP70. Interacts with PPP1R3D; in the presence of NHLC1/malin the interaction leads to ubiquitination and autophagic degradation of PPP1R3D. Interacts (via the phosphatase domain) with MAPT/Tau; the interaction dephosphorylates MAPT. Isoform 1 and isoform 2 interact to form a heterodimeric complex that lacks phosphatase activity (in vitro). Active phosphatase isoform 7 and isoform 1 interact with each other, but give rise to lower phosphatase activity than isoform 1 or isoform 7 by themselves (in vitro). Active phosphatase isoform 7 and inactive isoform 2 interact with each other, but give rise to lower phosphatase activity than isoform 7 by itself (in vitro). Interacts with PRDM8. Post-translationally, polyubiquitinated by NHLRC1/malin. In terms of processing, phosphorylation on Ser-25 by AMPK affects the phosphatase activity of the enzyme and its ability to homodimerize and interact with NHLRC1, PPP1R3C or PRKAA2. In terms of tissue distribution, expressed in heart, skeletal muscle, kidney, pancreas and brain. Isoform 4 is also expressed in the placenta.

Its subcellular location is the cytoplasm. It is found in the endoplasmic reticulum membrane. It localises to the cell membrane. The protein localises to the nucleus. It catalyses the reaction O-phospho-L-tyrosyl-[protein] + H2O = L-tyrosyl-[protein] + phosphate. It carries out the reaction O-phospho-L-seryl-[protein] + H2O = L-seryl-[protein] + phosphate. The catalysed reaction is O-phospho-L-threonyl-[protein] + H2O = L-threonyl-[protein] + phosphate. Plays an important role in preventing glycogen hyperphosphorylation and the formation of insoluble aggregates, via its activity as glycogen phosphatase, and by promoting the ubiquitination of proteins involved in glycogen metabolism via its interaction with the E3 ubiquitin ligase NHLRC1/malin. Shows strong phosphatase activity towards complex carbohydrates in vitro, avoiding glycogen hyperphosphorylation which is associated with reduced branching and formation of insoluble aggregates. Dephosphorylates phosphotyrosine and synthetic substrates, such as para-nitrophenylphosphate (pNPP), and has low activity with phosphoserine and phosphothreonine substrates (in vitro). Has been shown to dephosphorylate MAPT. Forms a complex with NHLRC1/malin and HSP70, which suppresses the cellular toxicity of misfolded proteins by promoting their degradation through the ubiquitin-proteasome system (UPS). Acts as a scaffold protein to facilitate PPP1R3C/PTG ubiquitination by NHLRC1/malin. Also promotes proteasome-independent protein degradation through the macroautophagy pathway. Functionally, does not bind to glycogen. Lacks phosphatase activity and might function as a dominant-negative regulator for the phosphatase activity of isoform 1 and isoform 7. In terms of biological role, has phosphatase activity (in vitro). The protein is Laforin (EPM2A) of Homo sapiens (Human).